The following is a 712-amino-acid chain: U11/U12 small nuclear ribonucleoprotein 48 kDa protein (712 aa).

The CHHC U11-48K-type zinc-finger motif lies at 98–125 (FVRCPFDSNHFMPPEALFLHSLRCPNTL). 4 residues coordinate Zn(2+): Cys101, His107, His117, and Cys121. The interval 562-712 (QSRSPIGNDQ…EDRYIPTEKE (151 aa)) is disordered. 5 stretches are compositionally biased toward basic and acidic residues: residues 585–595 (KQWKGENRADI), 603–614 (QNSDKVKRHDEY), 629–663 (KHSD…HSIE), 672–693 (SSRE…DRRS), and 702–712 (FEDRYIPTEKE).

As to quaternary structure, component of the U11/U12 snRNPs that are part of the U12-type spliceosome. Not found in the major spliceosome.

Its subcellular location is the nucleus. In terms of biological role, likely involved in U12-type 5' splice site recognition. The sequence is that of U11/U12 small nuclear ribonucleoprotein 48 kDa protein (SNRNP48) from Arabidopsis thaliana (Mouse-ear cress).